The chain runs to 511 residues: Centrosomal protein CCDC61 (511 aa).

Position 1 is an N-acetylmethionine (M1). A head domain region spans residues 1 to 143; it reads MDQPAGLQVD…PLPLPYQGKP (143 aa). 2 coiled-coil regions span residues 176–203 and 246–273; these read IWHLREQVTRLTSEKRELEAQLGRSREE and SRRLAKELEEVKASERNLRARLKTLNSE. A Phosphothreonine modification is found at T283. Disordered regions lie at residues 284-413 and 429-476; these read LPPV…DSFR and SHSV…GGWV. The span at 290-302 shows a compositional bias: basic and acidic residues; the sequence is REGRASSSRERST. Phosphoserine occurs at positions 330 and 332. Residues 360-369 show a composition bias toward low complexity; sequence KQQQQQRNRM. S371 and S374 each carry phosphoserine. Over residues 433-442 the composition is skewed to basic residues; that stretch reads SRSRRCRGRG. S446 is modified (phosphoserine). A compositionally biased stretch (polar residues) spans 449–458; that stretch reads PWSRSKTKST. The residue at position 472 (S472) is a Phosphoserine.

It belongs to the CCDC61 family. As to quaternary structure, forms homodimers (via head domain). Interacts with CEP170. Interacts with PCM1 and CEP131. Binds tubulin.

The protein localises to the cytoplasm. It is found in the cytoskeleton. It localises to the microtubule organizing center. Its subcellular location is the centrosome. The protein resides in the centriolar satellite. The protein localises to the cilium basal body. Its function is as follows. Microtubule-binding centrosomal protein required for centriole cohesion, independently of the centrosome-associated protein/CEP250 and rootletin/CROCC linker. In interphase, required for anchoring microtubule at the mother centriole subdistal appendages and for centrosome positioning. During mitosis, may be involved in spindle assembly and chromatin alignment by regulating the organization of spindle microtubules into a symmetrical structure. Plays a non-essential role in ciliogenesis. The chain is Centrosomal protein CCDC61 from Mus musculus (Mouse).